The chain runs to 448 residues: UDP-N-acetylmuramoylalanine--D-glutamate ligase (448 aa).

112-118 (GSNAKST) serves as a coordination point for ATP.

It belongs to the MurCDEF family.

The protein localises to the cytoplasm. It catalyses the reaction UDP-N-acetyl-alpha-D-muramoyl-L-alanine + D-glutamate + ATP = UDP-N-acetyl-alpha-D-muramoyl-L-alanyl-D-glutamate + ADP + phosphate + H(+). It participates in cell wall biogenesis; peptidoglycan biosynthesis. Its function is as follows. Cell wall formation. Catalyzes the addition of glutamate to the nucleotide precursor UDP-N-acetylmuramoyl-L-alanine (UMA). The polypeptide is UDP-N-acetylmuramoylalanine--D-glutamate ligase (Acinetobacter baumannii (strain ATCC 17978 / DSM 105126 / CIP 53.77 / LMG 1025 / NCDC KC755 / 5377)).